The following is a 320-amino-acid chain: Protein EI24 homolog (320 aa).

A run of 3 helical transmembrane segments spans residues 41–61, 94–114, and 175–195; these read QCFLLNGLIFLGSLGVFKWFI, GLLQLFYVFWFYPLYMLSFIL, and ILLLTFFFLEVCVVGVIPYIG. N217 carries N-linked (GlcNAc...) asparagine glycosylation. The next 3 membrane-spanning stretches (helical) occupy residues 227–247, 248–268, and 292–312; these read LDFFQSNWAFFAGFGSPCVLA, IFFLSPLVSGALMAILFPLFV, and LGKLPIFYIADTLSMLALSIF.

This sequence belongs to the EI24 (TC 9.B.7) family.

It is found in the membrane. The protein is Protein EI24 homolog of Arabidopsis thaliana (Mouse-ear cress).